We begin with the raw amino-acid sequence, 170 residues long: UPF0161 protein At3g09310 (170 aa).

Disordered regions lie at residues 49–70 (CLSAKSTPSKPDPASPQDGEEL) and 147–170 (SGIKLREGDEEEEDNYDDEDQRKI). Residues 154–170 (GDEEEEDNYDDEDQRKI) are compositionally biased toward acidic residues.

It belongs to the UPF0161 family.

In Arabidopsis thaliana (Mouse-ear cress), this protein is UPF0161 protein At3g09310.